Consider the following 457-residue polypeptide: Argininosuccinate lyase (457 aa).

It belongs to the lyase 1 family. Argininosuccinate lyase subfamily.

It is found in the cytoplasm. It catalyses the reaction 2-(N(omega)-L-arginino)succinate = fumarate + L-arginine. It participates in amino-acid biosynthesis; L-arginine biosynthesis; L-arginine from L-ornithine and carbamoyl phosphate: step 3/3. This is Argininosuccinate lyase from Escherichia coli O7:K1 (strain IAI39 / ExPEC).